We begin with the raw amino-acid sequence, 757 residues long: MDVNPTLLFLKVPAQNAISTTFPYTGDPPYSHGTGTGYTMDTVNRTHQYSERGKWTINTETGAPQLNPIDGPLPEDNEPTGYAQTDCVLEAMAFLEKSHPGIFENSCLETMEVVQQTRVDKLTQGRQTFDWTLNRNQPAATALANTIEVFRLNGLTTSESGRLIDFLKDVMESMEKEEMEIVTHFQRKRRVRDNMTKKMVTQRTIGKKKQKLNRRGYLIRALTLNTMTKDAERGKLKRRAIATPGMQIRGFVYFVETLARSICEKLEQSGLPVGGNEKKAKLANVVRKMMTNSQDTELSFTITGDNTKWNENQNPRMFLAMITYITRNQPEWFRNVLSVAPIMFSNKMARLGKGYMFESKNMKLRTQIPAEMLSSIDLRYFNDSTRRKIEKIRPLLIEGAASLSPGMMMGMFNMLSTVLGVSILNLGQKEYTKTSYWWDGLQSSDDFALIVNAPNHEGIQAGVDRFYRTCKLLGINMSKKKSYINRTGTFEFTSFFYRYGFVANFSMELPSFGVSGINESADMSIGVTVIKNNMINNDLGPATAQMALQLFIKDYRYTYRCHRGDTQIQTRRSFEIKKLWDQTRSKAGLLVSDGGPNLYNIRNLHIPEVCLKWELMDKDYQGRLCNPLNPFVSHKEIESVNNAVVMPSHGPAKTMEYDAVATTHSWVPKRNRSILNTSQRGILEDEQMYQKCCNLFEKFFPSSSYRRPVGISSMVEAMVSRARIDARIDFESGRIKKEDFAEIMKICSTIEDLRRQK.

Short sequence motifs (nuclear localization signal) lie at residues 187-195 (RKRRVRDNM) and 203-216 (RTIG…NRRG). Positions 249–256 (RGFVYFVE) are promoter-binding site. A RdRp catalytic domain is found at 286-483 (VRKMMTNSQD…GINMSKKKSY (198 aa)).

This sequence belongs to the influenza viruses polymerase PB1 family. In terms of assembly, influenza RNA polymerase is composed of three subunits: PB1, PB2 and PA. Interacts (via N-terminus) with PA (via C-terminus). Interacts (via C-terminus) with PB2 (via N-terminus); this interaction is essential for transcription initiation. Interacts (via C-terminus) with human PKP2 (via N-terminus); the interaction competitively inhibits the interaction between the RNA polymerase subunits PB1 and PB2. Phosphorylated by host PRKCA.

It is found in the host nucleus. Its subcellular location is the host cytoplasm. It carries out the reaction RNA(n) + a ribonucleoside 5'-triphosphate = RNA(n+1) + diphosphate. RNA-dependent RNA polymerase which is responsible for replication and transcription of virus RNA segments. The transcription of viral mRNAs occurs by a unique mechanism called cap-snatching. 5' methylated caps of cellular mRNAs are cleaved after 10-13 nucleotides by PA. In turn, these short capped RNAs are used as primers by PB1 for transcription of viral mRNAs. During virus replication, PB1 initiates RNA synthesis and copy vRNA into complementary RNA (cRNA) which in turn serves as a template for the production of more vRNAs. This is RNA-directed RNA polymerase catalytic subunit from Aves (Human).